The primary structure comprises 204 residues: Small ribosomal subunit protein uS4 (204 aa).

The disordered stretch occupies residues 1 to 49 (MSKRKSAKYKLDRRMGENIWGRPNSPVNKRSYGPGQHGQRRKGKTSDFG). The S4 RNA-binding domain occupies 94-154 (QRLDMVVYRA…NKAKEMALVI (61 aa)).

Belongs to the universal ribosomal protein uS4 family. Part of the 30S ribosomal subunit. Contacts protein S5. The interaction surface between S4 and S5 is involved in control of translational fidelity.

Functionally, one of the primary rRNA binding proteins, it binds directly to 16S rRNA where it nucleates assembly of the body of the 30S subunit. With S5 and S12 plays an important role in translational accuracy. This chain is Small ribosomal subunit protein uS4, found in Erythrobacter litoralis (strain HTCC2594).